Here is a 171-residue protein sequence, read N- to C-terminus: Secreted protein CSS3 (171 aa).

A signal peptide spans Met1–Ala20. Residues Asn37, Asn139, and Asn159 are each glycosylated (N-linked (GlcNAc...) asparagine).

It localises to the cytoplasm. The protein resides in the secreted. In Saccharomyces cerevisiae (strain ATCC 204508 / S288c) (Baker's yeast), this protein is Secreted protein CSS3.